Consider the following 62-residue polypeptide: Beta-defensin 33 (62 aa).

The N-terminal stretch at Met1–Gly20 is a signal peptide. Disulfide bonds link Cys30–Cys59, Cys37–Cys52, and Cys45–Cys60.

Belongs to the beta-defensin family.

The protein localises to the secreted. Functionally, has antibacterial activity. This is Beta-defensin 33 (Defb33) from Rattus norvegicus (Rat).